The primary structure comprises 347 residues: NADH-ubiquinone oxidoreductase chain 2 (347 aa).

The next 10 membrane-spanning stretches (helical) occupy residues Pro-3 to Ser-23, His-25 to Met-45, Leu-60 to Phe-80, Ala-96 to Pro-116, Ile-149 to Gly-169, Ile-178 to Pro-198, Met-200 to Met-220, Ala-237 to Leu-257, Glu-274 to Met-294, and Met-323 to Leu-343.

This sequence belongs to the complex I subunit 2 family. Core subunit of respiratory chain NADH dehydrogenase (Complex I) which is composed of 45 different subunits. Interacts with TMEM242.

The protein localises to the mitochondrion inner membrane. It catalyses the reaction a ubiquinone + NADH + 5 H(+)(in) = a ubiquinol + NAD(+) + 4 H(+)(out). Its function is as follows. Core subunit of the mitochondrial membrane respiratory chain NADH dehydrogenase (Complex I) which catalyzes electron transfer from NADH through the respiratory chain, using ubiquinone as an electron acceptor. Essential for the catalytic activity and assembly of complex I. In Mungos mungo (Banded mongoose), this protein is NADH-ubiquinone oxidoreductase chain 2.